The chain runs to 263 residues: CRISPR-associated protein Cas5 2 (263 aa).

This sequence belongs to the CRISPR-associated protein Cas5 family. Subtype I-A/Apern subfamily. As to quaternary structure, part of the aCascade ribonucleoprotein complex, minimally composed of Csa2 and Cas5a, which binds crRNA. Other possible components of aCascade in strain P1 are Cas6b (SSO1437) and Csa5 (SSO1443), while SSO1399, Cas5b (SSO1400) and SSO1401 have sometimes been seen weakly associated. Csa2 is probably the major RNA-binding subunit. The Csa2-Cas5a-crRNA complex also binds target DNA homologous to crRNA, probably forming an R-loop. Purified aCascade forms a filament about 6 nm in width.

Its function is as follows. CRISPR (clustered regularly interspaced short palindromic repeat) is an adaptive immune system that provides protection against mobile genetic elements (viruses, transposable elements and conjugative plasmids). CRISPR clusters contain spacers, sequences complementary to antecedent mobile elements, and target invading nucleic acids. CRISPR clusters are transcribed and processed into CRISPR RNA (crRNA). The sequence is that of CRISPR-associated protein Cas5 2 (cas5b) from Saccharolobus solfataricus (strain ATCC 35092 / DSM 1617 / JCM 11322 / P2) (Sulfolobus solfataricus).